We begin with the raw amino-acid sequence, 502 residues long: MTDKKYIVALDQGTTSSRAVVMDHDANIVSVSQREFEQIYPKPGWVEHDPMEIWATQSSTLVEVLAKADISSDEIAAIGITNQRETAIVWERETGKPIYNAIVWQCRRTAEICEKLKRDGMEDYIRSTTGLVVDPYFSGTKVKWILDHVEGSRERAKRGELLFGTVDTWLIWKMTQGRVHVTDYTNASRTMLFNIHKLDWDDKMLEALDIPRAMLPEVRKSSEVYGQTNIGGKGGTRIPISGIAGDQQAALFGQLCVKEGMAKNTYGTGCFMLMNTGEKAVKSENGLLTTIACGPRGEVNYALEGAVFMAGASIQWLRDEMKLISDAFDSEYFATKVKDTNGVYVVPAFTGLGAPYWDPYARGAIFGLTRGVNSNHIIRATLESIAYQTRDVLEAMQADSGIRLHALRVDGGAVANNFLMQFQSDILGTRVERPEVREVTALGAAYLAGLAVGFWQNLDELQEKAVIEREFRPGIETTERNYRYSGWKKAVKRALAWEEHEE.

Thr-14 contacts ADP. ATP-binding residues include Thr-14, Thr-15, and Ser-16. Position 14 (Thr-14) interacts with sn-glycerol 3-phosphate. Residue Arg-18 coordinates ADP. Positions 84, 85, 136, and 246 each coordinate sn-glycerol 3-phosphate. Glycerol is bound by residues Arg-84, Glu-85, Tyr-136, Asp-246, and Gln-247. Residues Thr-268 and Gly-311 each contribute to the ADP site. ATP-binding residues include Thr-268, Gly-311, Gln-315, and Gly-412. Positions 412 and 416 each coordinate ADP.

The protein belongs to the FGGY kinase family. As to quaternary structure, homotetramer and homodimer (in equilibrium). Heterodimer with EIIA-Glc. Binds 1 zinc ion per glycerol kinase EIIA-Glc dimer. The zinc ion is important for dimerization.

It catalyses the reaction glycerol + ATP = sn-glycerol 3-phosphate + ADP + H(+). Its pathway is polyol metabolism; glycerol degradation via glycerol kinase pathway; sn-glycerol 3-phosphate from glycerol: step 1/1. Its activity is regulated as follows. Activity of this regulatory enzyme is affected by several metabolites. Allosterically and non-competitively inhibited by fructose 1,6-bisphosphate (FBP) and unphosphorylated phosphocarrier protein EIIA-Glc (III-Glc), an integral component of the bacterial phosphotransferase (PTS) system. Functionally, key enzyme in the regulation of glycerol uptake and metabolism. Catalyzes the phosphorylation of glycerol to yield sn-glycerol 3-phosphate. The chain is Glycerol kinase from Enterobacter sp. (strain 638).